Here is a 418-residue protein sequence, read N- to C-terminus: Tektin-1 (418 aa).

3 coiled-coil regions span residues 21–84 (KNQY…LEQL), 268–308 (LKET…DQEG), and 336–383 (RLIK…ENTI). The tract at residues 399–418 (PRDGDDHGEWAGGSHPEAVC) is disordered.

This sequence belongs to the tektin family. As to quaternary structure, microtubule inner protein component of sperm flagellar doublet microtubules. Post-translationally, ubiquitinated, leading to its degradation. Deubiquitinated by USP16, promoting its stability. As to expression, expressed in trachea multiciliated cells.

Its subcellular location is the cytoplasm. The protein resides in the cytoskeleton. It is found in the cilium axoneme. The protein localises to the flagellum axoneme. Functionally, microtubule inner protein (MIP) part of the dynein-decorated doublet microtubules (DMTs) in cilia and flagellar axoneme. Forms filamentous polymers in the walls of ciliary and flagellar microtubules. In Bos taurus (Bovine), this protein is Tektin-1 (TEKT1).